The chain runs to 460 residues: Phosphoenolpyruvate carboxylase (460 aa).

The protein belongs to the PEPCase type 2 family. Homotetramer. Mg(2+) is required as a cofactor.

It carries out the reaction oxaloacetate + phosphate = phosphoenolpyruvate + hydrogencarbonate. Functionally, catalyzes the irreversible beta-carboxylation of phosphoenolpyruvate (PEP) to form oxaloacetate (OAA), a four-carbon dicarboxylic acid source for the tricarboxylic acid cycle. The chain is Phosphoenolpyruvate carboxylase from Pyrobaculum arsenaticum (strain DSM 13514 / JCM 11321 / PZ6).